The sequence spans 775 residues: DENN domain-containing protein 1B (775 aa).

Residues 14–143 form the uDENN domain; it reads DLVLKVKCHA…YNHPVPKANT (130 aa). A cDENN domain is found at 180–316; it reads GLPTIPESRN…VVSALKNKLK (137 aa). The 78-residue stretch at 318-395 folds into the dDENN domain; the sequence is QSTATGDGVA…DGRLAKLNAG (78 aa). The short motif at 398–402 is the FXDXF motif element; that stretch reads FSDVF. At Tyr520 the chain carries Phosphotyrosine. 4 positions are modified to phosphoserine: Ser535, Ser536, Ser549, and Ser552. The Clathrin box motif lies at 566 to 575; it reads DLLGEILDTL. Disordered stretches follow at residues 635 to 654 and 671 to 706; these read DSALHGKHLPPSPRKRVSSS and HLGADNVSDPTSGLDFQLTSPEVSQTDKGKTEKRET. The span at 639 to 651 shows a compositional bias: basic residues; sequence HGKHLPPSPRKRV. Ser652 and Ser653 each carry phosphoserine. The span at 695-706 shows a compositional bias: basic and acidic residues; that stretch reads QTDKGKTEKRET.

Interacts with RAB35. Interacts with clathrin heavy chain/CLTC. Interacts with components of the adapter protein complex 2 (AP-2) AP2A2 and AP2B1. Interacts with CD3E. Post-translationally, phosphorylated on serine and/or threonine, possibly regulating the guanine nucleotide exchange factor (GEF) activity. As to expression, highly expressed in dendritic and natural killer cells and at lower levels in other myeloid lineage cells and in pituitary. Significantly up-regulated in effector memory T-cells as compared with naive T-cells.

The protein resides in the cytoplasm. Its subcellular location is the cytosol. It is found in the cytoplasmic vesicle. The protein localises to the clathrin-coated vesicle. In terms of biological role, guanine nucleotide exchange factor (GEF) for RAB35 that acts as a regulator of T-cell receptor (TCR) internalization in TH2 cells. Acts by promoting the exchange of GDP to GTP, converting inactive GDP-bound RAB35 into its active GTP-bound form. Plays a role in clathrin-mediated endocytosis. Controls cytokine production in TH2 lymphocytes by controlling the rate of TCR internalization and routing to endosomes: acts by mediating clathrin-mediated endocytosis of TCR via its interaction with the adapter protein complex 2 (AP-2) and GEF activity. Dysregulation leads to impaired TCR down-modulation and recycling, affecting cytokine production in TH2 cells. This is DENN domain-containing protein 1B from Homo sapiens (Human).